Consider the following 526-residue polypeptide: Peptide chain release factor 3 (526 aa).

A tr-type G domain is found at aspartate 8–glutamine 277. GTP-binding positions include serine 17–threonine 24, aspartate 85–histidine 89, and asparagine 139–aspartate 142.

This sequence belongs to the TRAFAC class translation factor GTPase superfamily. Classic translation factor GTPase family. PrfC subfamily.

The protein localises to the cytoplasm. Increases the formation of ribosomal termination complexes and stimulates activities of RF-1 and RF-2. It binds guanine nucleotides and has strong preference for UGA stop codons. It may interact directly with the ribosome. The stimulation of RF-1 and RF-2 is significantly reduced by GTP and GDP, but not by GMP. In Actinobacillus succinogenes (strain ATCC 55618 / DSM 22257 / CCUG 43843 / 130Z), this protein is Peptide chain release factor 3.